The sequence spans 1055 residues: MSLEQYVSDKAISLLGMSEPSVVEYLIAEAKGSSSSNNLYQKLVSFGMDGDDPAVKEFAHTLYARIPREGSRPKENYNARKKKEQGILQMERLNSSYDLLIEPQSHETPGKPLKKKSRSKTPKREIARRQRDEDEWESDEYEEVVDGSASHPIEEDSVSTDFQNHDYEKSSDPETERLNDLREREEFEERLRRKDLEAATNEFVEDYSSKFSSEELALRKLADDPESWRKLASELRKKSRQQYLKPRAQQQLEILRREIRDEEQLFAGEKLTQAEIRELEKKKELLRIAEERQRLEKQATEYQMPEDYFTEQGKLDRKRKEEVLYQRYKDSNEGEQNEVTMGAAEQQRWEAQQINKALLFDQNEWLPPGEKQFDFVFDESQQIDFLLDTKLSAENPVDTDKMTDVKVEKSLESSRKSLPVYQYKDDLLKAINEYQVLLIVAETGSGKTTQLPQFLHEAGYTKGNKKICCTQPRRVAAMSVAARVAKEMDVRLGQEVGYSIRFENATSEKTVIKYLTDGMLLREFLTEPDLASYSVIIIDEAHERTLHTDILFGLVKDIARFRPDLKVLISSATIDAEKFSAYFDEAPVFYVPGRRYPVDIYYTPQPEANYIQAAITTILQIHTTQPAGDILVFLTGQDEIELMSENMQELCRILGKRIPEIILCPIYANLPSELQAKIFDPTPPGARKVVLATNIAETSITIDGVNFVIDSGFVKQNMYNPRTGMESLVSVPCSRASADQRAGRAGRVGPGKCFRLYTRRTYNNELDMVTSPEIQRTNLTNIVLLLKSLGINNLLDFDFMDAPPPETLMRSLELLYALGALNNRGELTKLGRQMAEFPTDPMLSKSLIASSKYGCVEEVLSIVSMLGEASSLFYRPKDKIMEADKARANFTQPGGDHLTLLHIWNEWVDTDFSYNWARENFLQYKSLCRARDVRDQLANLCERVEIELVTNSSESLDPIKKAITAGYFSNAARLDRSGDSYRTVKSNQTVYIHPSSSVAEKKPKVIIYFELVLTTKEYCRQITEIQPEWLLEISPHYFKPENIEELQKTQKRHKR.

Over residues proline 67–asparagine 78 the composition is skewed to basic and acidic residues. Residues proline 67–arginine 184 form a disordered region. The segment covering proline 112–threonine 121 has biased composition (basic residues). Basic and acidic residues predominate over residues proline 122–aspartate 132. The span at glutamate 133–valine 145 shows a compositional bias: acidic residues. Residues glutamine 163 to arginine 184 are compositionally biased toward basic and acidic residues. One can recognise a Helicase ATP-binding domain in the interval leucine 428–proline 592. Alanine 441–threonine 448 contacts ATP. Positions aspartate 539–histidine 542 match the DEAH box motif. Residues threonine 617–glycine 790 enclose the Helicase C-terminal domain.

The protein belongs to the DEAD box helicase family. DEAH subfamily. DDX16/PRP8 sub-subfamily.

It is found in the nucleus. The enzyme catalyses ATP + H2O = ADP + phosphate + H(+). Its function is as follows. Involved in pre-mRNA splicing. Is required together with ATP and at least one other factor, for the first cleavage-ligation reaction. Functions as a molecular motor in the activation of the precatalytic spliceosome for the first transesterification reaction of pre-mRNA splicing by hydrolyzing ATP to cause the activation of the spliceosome without the occurrence of splicing. This chain is Pre-mRNA-splicing factor ATP-dependent RNA helicase-like protein cdc28 (cdc28), found in Schizosaccharomyces pombe (strain 972 / ATCC 24843) (Fission yeast).